Here is a 544-residue protein sequence, read N- to C-terminus: Probable protein kinase UbiB (544 aa).

The region spanning 123–501 (EFDIKPLASA…KRQQATGKFL (379 aa)) is the Protein kinase domain. ATP-binding positions include 129–137 (LASASIAQV) and Lys152. Asp287 (proton acceptor) is an active-site residue. The next 2 helical transmembrane spans lie at 496–516 (ATGK…AILV) and 519–539 (AYEQ…LLSW).

This sequence belongs to the ABC1 family. UbiB subfamily.

The protein resides in the cell inner membrane. It participates in cofactor biosynthesis; ubiquinone biosynthesis [regulation]. In terms of biological role, is probably a protein kinase regulator of UbiI activity which is involved in aerobic coenzyme Q (ubiquinone) biosynthesis. This chain is Probable protein kinase UbiB, found in Vibrio campbellii (strain ATCC BAA-1116).